The following is a 494-amino-acid chain: Cysteine--tRNA ligase (494 aa).

Position 29 (Cys-29) interacts with Zn(2+). Positions 31-41 match the 'HIGH' region motif; that stretch reads VTVYDHCHIGH. Cys-209, His-234, and Glu-238 together coordinate Zn(2+). Positions 266–270 match the 'KMSKS' region motif; it reads KMSKS. Residue Lys-269 participates in ATP binding.

The protein belongs to the class-I aminoacyl-tRNA synthetase family. In terms of assembly, monomer. It depends on Zn(2+) as a cofactor.

The protein localises to the cytoplasm. It catalyses the reaction tRNA(Cys) + L-cysteine + ATP = L-cysteinyl-tRNA(Cys) + AMP + diphosphate. The chain is Cysteine--tRNA ligase from Geotalea uraniireducens (strain Rf4) (Geobacter uraniireducens).